The primary structure comprises 352 residues: fMet-Leu-Phe receptor (352 aa).

The Extracellular segment spans residues 1–27 (MDSNASLPLNVSGGTQATPAGLVVLDV). N-linked (GlcNAc...) asparagine glycosylation is found at N4 and N10. The helical transmembrane segment at 28–50 (FSYLILVVTFVLGVLGNGLVIWV) threads the bilayer. Residues 51 to 61 (TGFRMTHTVTT) are Cytoplasmic-facing. The helical transmembrane segment at 62–83 (ISYLNLALADFSFTSTLPFFIV) threads the bilayer. At 84 to 100 (TKALGGHWPFGWFLCKF) the chain is on the extracellular side. C98 and C178 form a disulfide bridge. The helical transmembrane segment at 101–121 (VFTIVDINLFGSVFLIALIAL) threads the bilayer. Residues 122–140 (DRCICVLHPVWAQNHRNVS) are Cytoplasmic-facing. Residues 141-162 (LAKKVIVGPWICALLLTLPVII) traverse the membrane as a helical segment. Topologically, residues 163-207 (RVTTLSHPRAPGKMACTFDWSPWTEDPAEKLKVAISMFMVRGIIR) are extracellular. A helical transmembrane segment spans residues 208–228 (FIIGFSTPMSIVAVCYGLIAT). Over 229–244 (KIHRQGLIKSSRPLRV) the chain is Cytoplasmic. The chain crosses the membrane as a helical span at residues 245–268 (LSFVVASFLLCWSPYQIAALIATV). Topologically, residues 269–287 (RIRELLLGMGKDLRIVLDV) are extracellular. Residues 288 to 307 (TSFVAFFNSCLNPMLYVFMG) traverse the membrane as a helical segment. Residues 308-352 (QDFRERLIHSLPASLERALSEDSAQTSDTGTNSTSAPAEAELQAI) lie on the Cytoplasmic side of the membrane.

This sequence belongs to the G-protein coupled receptor 1 family. In terms of processing, phosphorylated; which is necessary for desensitization. As to expression, neutrophils.

Its subcellular location is the cell membrane. In terms of biological role, high affinity receptor for N-formyl-methionyl peptides (fMLP), which are powerful neutrophil chemotactic factors. Binding of fMLP to the receptor stimulates intracellular calcium mobilization and superoxide anion release. This response is mediated via a G-protein that activates a phosphatidylinositol-calcium second messenger system. Receptor for TAFA4, mediates its effects on chemoattracting macrophages, promoting phagocytosis and increasing ROS release. Receptor for cathepsin CTSG, leading to increased phagocyte chemotaxis. This chain is fMet-Leu-Phe receptor (FPR1), found in Oryctolagus cuniculus (Rabbit).